Consider the following 385-residue polypeptide: MALDGENRDGGSASVRVLKHCLEDVDSISSLPDVILQENLSLIPTKFAIRTSVLSKRWRHVWSETPSLDFDDCYKLDVDFIDKTLALYRARKIMTFDLWITNGINLPYIDGWIKFAMSRNVENLFLSFDFRLYDVPDYLYINSSVKQLVLGTESSELNPRCSVSWSSLTKLSLFSDESIAKILSGCPIIESLTLHFCDQLMVLDLTKSPSLKILEIHGSIWGSGPKHIVAPHIHSLTLKTSQFFIYFCDISSLTEAKVDICFCSLKEIKANFLLDTVLKCLYKLQNVDKLTFGANFLKILSLAEGRGLPFPMFKAKALTLETTISKYVIPGILRVLQNSPELKKLTLHTMDREARTMSFHFEFVESEILTICFYINEILFCSSTG.

In terms of domain architecture, F-box spans 25-73 (VDSISSLPDVILQENLSLIPTKFAIRTSVLSKRWRHVWSETPSLDFDDC).

This chain is Putative F-box protein At1g49610, found in Arabidopsis thaliana (Mouse-ear cress).